The primary structure comprises 1021 residues: Multidrug resistance protein MdtC (1021 aa).

The Cytoplasmic portion of the chain corresponds to 1–6 (MKFFAL). A helical membrane pass occupies residues 7–29 (FIYRPVATILLSVAITLCGILGF). Topologically, residues 30–335 (RMLPVAPLPQ…TIRASLEEVE (306 aa)) are periplasmic. Residues 336 to 353 (QTLIISVALVILVVFLFL) form a helical membrane-spanning segment. Residues 354–359 (RSGRAT) lie on the Cytoplasmic side of the membrane. The helical transmembrane segment at 360-379 (IIPAVAVPVSLIGTFAAMYL) threads the bilayer. The Periplasmic segment spans residues 380–388 (CGFSLNNLS). A helical membrane pass occupies residues 389-411 (LMALTIATGFVVDDAIVVLENIA). Over 412-430 (RHLEAGMKPLQAALQGTRE) the chain is Cytoplasmic. The chain crosses the membrane as a helical span at residues 431–453 (VGFTVLSMSLSLVAVFLPLLLMG). At 454–467 (GLPGRLLREFAVTL) the chain is on the periplasmic side. A helical transmembrane segment spans residues 468-490 (SVAIGISLLVSLTLTPMMCGWML). The Cytoplasmic segment spans residues 491 to 848 (KASKPREQKR…QVFQETMNSQ (358 aa)). The chain crosses the membrane as a helical span at residues 849-871 (VILIIAAIATVYIVLGILYESYV). The Periplasmic segment spans residues 872-890 (HPLTILSTLPSAGVGALLA). Residues 891-913 (LELFNAPFSLIALIGIMLLIGIV) form a helical membrane-spanning segment. Residues 914-943 (KKNAIMMVDFALEAQRHGNLTPQEAIFQAC) are Cytoplasmic-facing. Residues 944–966 (LLRFRPIMMTTLAALFGALPLVL) form a helical membrane-spanning segment. Residues 967–980 (SGGDGSELRQPLEI) are Periplasmic-facing. Residues 981–1003 (TIVGGLVMSQLLTLYTTPVVYLF) form a helical membrane-spanning segment. Over 1004-1021 (FDRLRLRFSRKPKQTVTE) the chain is Cytoplasmic.

The protein belongs to the resistance-nodulation-cell division (RND) (TC 2.A.6) family. MdtC subfamily. As to quaternary structure, part of a tripartite efflux system composed of MdtA, MdtB and MdtC. MdtC forms a heteromultimer with MdtB.

The protein resides in the cell inner membrane. The chain is Multidrug resistance protein MdtC from Shigella flexneri.